The chain runs to 406 residues: MTEGHPDKICDQISDTILDALLTEDPSSRVAAEVVVNTGLVLITGEVSTQAQTNLIDLARRKIAETGYTGEDSGFGANNCTVLIALDKQSPDIAQGVDTAQEQRQASSDERFDSIGAGDQGIMFGYACNEAPELMPLPISLSHRLARQLAVVRHNGQLDYLRPDGKTQVTIAYEDGKPVAIDTILISTQHKAAIGDISDDNAVQERIKSDLWEQVVLPVFSDLVIQPDSATRFLVNPTGKFVIGGPQGDAGLTGRKIIVDTYGGYSRHGGGAFSGKDPTKVDRSAAYACRYVAKNIVAAGLAEKCEVQLSYAIGVARPVSVLVETFGTGKVADEVLLDLVRKHFELHPAGIIEHFNLQRLPGERGGRFYQEVAAYGHFGRNDLDLPWEQTDKADTLRQEALATTQA.

His5 contributes to the ATP binding site. Asp7 contributes to the Mg(2+) binding site. Residue Glu33 coordinates K(+). 2 residues coordinate L-methionine: Glu46 and Gln89. The interval 89–99 (QSPDIAQGVDT) is flexible loop. Residues 164-166 (DGK), 240-241 (KF), Asp249, 255-256 (RK), Ala272, and Lys276 each bind ATP. Asp249 provides a ligand contact to L-methionine. Lys280 provides a ligand contact to L-methionine.

It belongs to the AdoMet synthase family. As to quaternary structure, homotetramer; dimer of dimers. It depends on Mg(2+) as a cofactor. Requires K(+) as cofactor.

It localises to the cytoplasm. The catalysed reaction is L-methionine + ATP + H2O = S-adenosyl-L-methionine + phosphate + diphosphate. The protein operates within amino-acid biosynthesis; S-adenosyl-L-methionine biosynthesis; S-adenosyl-L-methionine from L-methionine: step 1/1. Functionally, catalyzes the formation of S-adenosylmethionine (AdoMet) from methionine and ATP. The overall synthetic reaction is composed of two sequential steps, AdoMet formation and the subsequent tripolyphosphate hydrolysis which occurs prior to release of AdoMet from the enzyme. The chain is S-adenosylmethionine synthase from Synechococcus sp. (strain ATCC 27144 / PCC 6301 / SAUG 1402/1) (Anacystis nidulans).